The sequence spans 64 residues: MSGREGGKKKPLKAPKKDSKDLDEDDMAFKQKQKEQQKALEAAKANASKKGPLVGGGIKKSGKK.

Positions 1 to 64 are disordered; it reads MSGREGGKKK…GGGIKKSGKK (64 aa). Positions 27 to 38 are enriched in basic and acidic residues; it reads MAFKQKQKEQQK. Residues 27-50 adopt a coiled-coil conformation; sequence MAFKQKQKEQQKALEAAKANASKK. Over residues 39-50 the composition is skewed to low complexity; the sequence is ALEAAKANASKK. A compositionally biased stretch (gly residues) spans 53–64; sequence LVGGGIKKSGKK.

The protein is Translation machinery-associated protein 7 homolog of Drosophila melanogaster (Fruit fly).